The following is a 229-amino-acid chain: Potassium/proton antiporter CemA (229 aa).

Transmembrane regions (helical) follow at residues 7 to 27, 106 to 126, and 189 to 209; these read FSPIFHLSFIVFLPWGIYLSF, MILRLSTNLICVVIISGFYIW, and IISGLVSTFPVILDTIFKYWI.

It belongs to the CemA family.

The protein resides in the plastid membrane. It carries out the reaction K(+)(in) + H(+)(out) = K(+)(out) + H(+)(in). May be involved in proton extrusion. The polypeptide is Potassium/proton antiporter CemA (Cuscuta reflexa (Southern Asian dodder)).